The primary structure comprises 117 residues: Nascent polypeptide-associated complex protein (117 aa).

The NAC-A/B domain maps to 9–77; sequence PKQLKQMQRA…ARERSLEAEM (69 aa).

The protein belongs to the NAC-alpha family. In terms of assembly, homodimer. Interacts with the ribosome. Binds ribosomal RNA.

In terms of biological role, contacts the emerging nascent chain on the ribosome. This is Nascent polypeptide-associated complex protein from Methanothermobacter thermautotrophicus (strain ATCC 29096 / DSM 1053 / JCM 10044 / NBRC 100330 / Delta H) (Methanobacterium thermoautotrophicum).